We begin with the raw amino-acid sequence, 374 residues long: Proteinase-activated receptor 3 (374 aa).

Residues Met1 to Ser21 form the signal peptide. A propeptide spans Gly22–Lys38 (removed for receptor activation). Residues Asn25 and Asn82 are each glycosylated (N-linked (GlcNAc...) asparagine). Topologically, residues Thr39–Thr94 are extracellular. Residues Lys95 to Phe120 form a helical membrane-spanning segment. Topologically, residues Phe121–Thr128 are cytoplasmic. The chain crosses the membrane as a helical span at residues Thr129–Phe148. Residues Lys149 to Arg167 lie on the Extracellular side of the membrane. A disulfide bond links Cys166 and Cys245. A helical transmembrane segment spans residues Ala168–Ile189. Over Asn190–Lys206 the chain is Cytoplasmic. A helical transmembrane segment spans residues His207–Ile230. The Extracellular portion of the chain corresponds to Leu231 to Leu260. A helical transmembrane segment spans residues Tyr261–Tyr280. Over Cys281–Leu297 the chain is Cytoplasmic. A helical transmembrane segment spans residues Trp298–Ile322. At Ile323 to Leu336 the chain is on the extracellular side. A glycan (N-linked (GlcNAc...) asparagine) is linked at Asn331. Residues Tyr337 to Met361 traverse the membrane as a helical segment. Residues Ser362 to Lys374 are Cytoplasmic-facing.

The protein belongs to the G-protein coupled receptor 1 family. Interacts with INSC/inscuteable and probably GPSM2. In terms of processing, a proteolytic cleavage generates a new N-terminus that functions as a tethered ligand. As to expression, highest expression in the megakaryocytes of the bone marrow, lower in mature megakaryocytes, in platelets and in a variety of other tissues such as heart and gut.

It localises to the cell membrane. Its function is as follows. Receptor for activated thrombin coupled to G proteins that stimulate phosphoinositide hydrolysis. In Homo sapiens (Human), this protein is Proteinase-activated receptor 3 (F2RL2).